Reading from the N-terminus, the 459-residue chain is Exodeoxyribonuclease 7 large subunit (459 aa).

This sequence belongs to the XseA family. Heterooligomer composed of large and small subunits.

The protein resides in the cytoplasm. It catalyses the reaction Exonucleolytic cleavage in either 5'- to 3'- or 3'- to 5'-direction to yield nucleoside 5'-phosphates.. Functionally, bidirectionally degrades single-stranded DNA into large acid-insoluble oligonucleotides, which are then degraded further into small acid-soluble oligonucleotides. This is Exodeoxyribonuclease 7 large subunit from Yersinia pseudotuberculosis serotype IB (strain PB1/+).